An 862-amino-acid polypeptide reads, in one-letter code: Interleukin-12 receptor subunit beta-2 (862 aa).

The first 23 residues, methionine 1–alanine 23, serve as a signal peptide directing secretion. The Extracellular segment spans residues lysine 24–asparagine 622. Asparagine 48, asparagine 129, asparagine 166, asparagine 195, and asparagine 271 each carry an N-linked (GlcNAc...) asparagine glycan. 5 Fibronectin type-III domains span residues glutamine 126–isoleucine 221, proline 226–glutamate 319, glutamate 320–alanine 419, alanine 423–alanine 520, and proline 521–lysine 620. A WSXWS motif motif is present at residues tryptophan 305–serine 309. N-linked (GlcNAc...) asparagine glycans are attached at residues asparagine 347, asparagine 376, and asparagine 480. The chain crosses the membrane as a helical span at residues tryptophan 623–threonine 643. At histidine 644 to leucine 862 the chain is on the cytoplasmic side. The Box 1 motif motif lies at cysteine 662 to alanine 670. A disordered region spans residues asparagine 725 to alanine 755. The span at glutamine 728–methionine 744 shows a compositional bias: basic and acidic residues. The tract at residues threonine 796–leucine 801 is required for STAT4 binding. Tyrosine 800 carries the phosphotyrosine modification.

It belongs to the type I cytokine receptor family. Type 2 subfamily. In terms of assembly, heterodimer/heterooligomer; disulfide-linked. The functional high affinity IL12 receptor is composed of I12RB1 and IL12RB2. Il12RB2 binds JAK2 (via its N-terminal) through a membrane-proximal region of the cytoplasmic domain. Interaction, in vitro and in vivo, with SOCS3 (via its SH2 domain) inhibits the STAT4-mediated activation. Binds STAT4 through a membrane-distal C-terminal region. Post-translationally, on IL12 binding, phosphorylated on C-terminal tyrosine residues by JAK2. Phosphorylation on Tyr-800 is required for STAT4 binding and activation, and for SOCS3 binding. In terms of tissue distribution, isoform 2 is expressed at similar levels in both naive and activated T-cells.

The protein localises to the membrane. Functionally, receptor for interleukin-12. This subunit is the signaling component coupling to the JAK2/STAT4 pathway. Promotes the proliferation of T-cells as well as NK cells. Induces the promotion of T-cells towards the Th1 phenotype by strongly enhancing IFN-gamma production. The sequence is that of Interleukin-12 receptor subunit beta-2 (IL12RB2) from Homo sapiens (Human).